Reading from the N-terminus, the 458-residue chain is uncharacterized protein (458 aa).

Disordered stretches follow at residues 339–397 (GTGY…ARIL) and 434–458 (YNSE…EDDC). Acidic residues-rich tracts occupy residues 344–390 (SDSD…EEEP) and 436–458 (SEDE…EDDC).

This is an uncharacterized protein from Invertebrate iridescent virus 3 (IIV-3).